Consider the following 324-residue polypeptide: Fructose-1,6-bisphosphatase class 1 (324 aa).

Glu-88, Asp-107, Leu-109, and Asp-110 together coordinate Mg(2+). Substrate contacts are provided by residues 110 to 113, Asn-199, and Lys-265; that span reads DGSS. Mg(2+) is bound at residue Glu-271.

This sequence belongs to the FBPase class 1 family. Homotetramer. The cofactor is Mg(2+).

It is found in the cytoplasm. The catalysed reaction is beta-D-fructose 1,6-bisphosphate + H2O = beta-D-fructose 6-phosphate + phosphate. Its pathway is carbohydrate biosynthesis; gluconeogenesis. This chain is Fructose-1,6-bisphosphatase class 1, found in Neisseria meningitidis serogroup A / serotype 4A (strain DSM 15465 / Z2491).